Reading from the N-terminus, the 641-residue chain is Toxin TseL (641 aa).

In terms of assembly, interacts with VgrG3; this interaction allows TseL secretion to target cells.

The protein resides in the secreted. Toxin secreted by the type VI (T6SS) secretion system that acts on prokaryotic as well as eukaryotic target cells. The chain is Toxin TseL from Vibrio cholerae serotype O1 (strain ATCC 39315 / El Tor Inaba N16961).